Here is a 441-residue protein sequence, read N- to C-terminus: Capsid protein (441 aa).

Residues 26-63 (DSKKKQPIYQNSSESEESETENKNFIYDFSSEEDFEEP) form a disordered region. The short motif at 77-79 (KRK) is the Nuclear localization signal element. Residues 381-398 (CQCWLCHEEGHYANECPK) form a CCHC-type zinc finger.

Belongs to the caulimoviridae capsid protein family. In terms of assembly, interacts (via nuclear localization signal) with host importin alpha.

It localises to the virion. The protein resides in the host nucleus. Self assembles to form an icosahedral capsid, about 50 nm in diameter, nm, composed of 420 subunits of the viral capsid protein. The capsid encapsulates the genomic dsDNA. Following virus entry into host cell, provides nuclear import of the viral genome. Virus particles do not enter the nucleus, but dock at the nuclear membrane through the interaction with host importins. In Soybean chlorotic mottle virus, this protein is Capsid protein.